Consider the following 583-residue polypeptide: MLRAGPPSHTLLRLPLLQLLLLLLVQAVGRGLGRASPAGGPLEDVVIERYHIPRVCPREVQMGDFVRYHYNGTFEDGKKFDSSYDRHTLVAIVVGVGRLITGMDRGLMGMCVNERRRLIVPPHLGYGSIGVAGLIPPDATLYFDVVLLDVWNKEDTVQVSTLLRPPHCPRMVQDSDFVRYHYNGTLLDGTAFDTSYSKGGTYDTYVGSGWLIKGMDQGLLGMCPGERRKIVIPPFLAYGEKGYGTVIPSQASLVFHVLLIDVHNPKDTVQLETLELPPGCVRRAVAGDFMRYHYNGSLMDGTLFDSSYSRNHTYNTYVGQGYIIPGMDQGLQGSCMGERRRITIPPHLAYGENGTGDKIPGSAVLIFDVHVIDFHNPADPVEIKTLSRPLETCNETAKLGDFVHYHYNCSLLDGTRLFSSHDYGAPQEATLGAHKVIEGLDTGLQGMCVGERRQLVVPPHLAHGESGARGVPGSAVLLFEVELVSREDGLPTGYLFVWHEDPPAHLFEHMDLNKDGEVPVEEFSTFIKAQVSEGKGRLLPGQDPEKTIGDMFQNQDRNQDGKITAEELKLKSDEDQDRVHEEL.

Residues 1–27 form the signal peptide; it reads MLRAGPPSHTLLRLPLLQLLLLLLVQA. PPIase FKBP-type domains follow at residues 63–151, 175–263, 287–375, and 400–487; these read GDFV…LDVW, SDFV…IDVH, GDFM…IDFH, and GDFV…VSRE. Asn-71, Asn-183, and Asn-295 each carry an N-linked (GlcNAc...) asparagine glycan. 2 consecutive EF-hand domains span residues 498–533 and 543–578; these read WHED…QVSE and DPEK…DQDR. Ca(2+) contacts are provided by Asp-511, Asn-513, Asp-515, Glu-517, Glu-522, Asp-556, Asn-558, Asp-560, Lys-562, and Glu-567. The disordered stretch occupies residues 534-583; it reads GKGRLLPGQDPEKTIGDMFQNQDRNQDGKITAEELKLKSDEDQDRVHEEL. Residues 557–583 show a composition bias toward basic and acidic residues; that stretch reads RNQDGKITAEELKLKSDEDQDRVHEEL. The short motif at 580–583 is the Prevents secretion from ER element; the sequence is HEEL.

In terms of processing, glycosylated and phosphorylated.

The protein resides in the endoplasmic reticulum lumen. The catalysed reaction is [protein]-peptidylproline (omega=180) = [protein]-peptidylproline (omega=0). Inhibited by both FK506 and rapamycin, but not by cyclosporin A. PPIases accelerate the folding of proteins during protein synthesis. This Bos taurus (Bovine) protein is Peptidyl-prolyl cis-trans isomerase FKBP10 (FKBP10).